A 561-amino-acid chain; its full sequence is DNA ligase B (561 aa).

Lys125 (N6-AMP-lysine intermediate) is an active-site residue.

It belongs to the NAD-dependent DNA ligase family. LigB subfamily.

It carries out the reaction NAD(+) + (deoxyribonucleotide)n-3'-hydroxyl + 5'-phospho-(deoxyribonucleotide)m = (deoxyribonucleotide)n+m + AMP + beta-nicotinamide D-nucleotide.. Catalyzes the formation of phosphodiester linkages between 5'-phosphoryl and 3'-hydroxyl groups in double-stranded DNA using NAD as a coenzyme and as the energy source for the reaction. The polypeptide is DNA ligase B (Escherichia coli O127:H6 (strain E2348/69 / EPEC)).